Here is a 90-residue protein sequence, read N- to C-terminus: Putative beta-neurotoxin RjAa2f (90 aa).

The signal sequence occupies residues 1–18 (MKILIFIIASFMLIGVEC). The LCN-type CS-alpha/beta domain maps to 19–89 (KEGYPMGSDG…VWDSKTNKCG (71 aa)). Cystine bridges form between cysteine 29–cysteine 88, cysteine 33–cysteine 62, cysteine 40–cysteine 69, and cysteine 44–cysteine 71.

Belongs to the long (4 C-C) scorpion toxin superfamily. Sodium channel inhibitor family. Beta subfamily. In terms of tissue distribution, expressed by the venom gland.

The protein localises to the secreted. Beta toxins bind voltage-independently at site-4 of sodium channels (Nav) and shift the voltage of activation toward more negative potentials thereby affecting sodium channel activation and promoting spontaneous and repetitive firing. This chain is Putative beta-neurotoxin RjAa2f, found in Rhopalurus junceus (Caribbean blue scorpion).